Reading from the N-terminus, the 1023-residue chain is MAFKVGRDKYEPAAVSEQGDKKGKKGKKDRDMDELKKEVSMDDHKLSLDELHRKYGTDLSRGLTSARAAEILARDGPNALTPPPTTPEWIKFCRQLFGGFSMLLWIGAILCFLAYSIQAATEEEPQNDNLYLGVVLSAVVIITGCFSYYQEAKSSKIMESFKNMVPQQALVIRNGEKMSINAEEVVVGDLVEVKGGDRIPADLRIISANGCKVDNSSLTGESEPQTRSPDFTNENPLETRNIAFFSTNCVEGTARGIVVYTGDRTVMGRIATLASGLEGGQTPIAAEIEHFIHIITGVAVFLGVSFFILSLILEYTWLEAVIFLIGIIVANVPEGLLATVTVCLTLTAKRMARKNCLVKNLEAVETLGSTSTICSDKTGTLTQNRMTVAHMWFDNQIHEAGTTENQSGVSFDKTSATWLALSRIAGLCNRAVFQANQENLPILKRAVAGDASESALLKCIELCCGSVKEMRERYAKIVEIPFNSTNKYQLSIHKNPNTSEPRHLLVMKGAPERILDRCSSILLHGKEQPLDEELKDAFQNAYLELGGLGERVLGFCHLFLPDEQFPEGFQFDTDDVNFPIDNLCFVGLISMIDPPRAAVPDAVGKCRSAGIKVIMVTGDHPITAKAIAKGVGIISEGNETVEDIAARLNIPVSQVNPRDAKACVVHGSDLKDMTSEQLDDILKYHTEIVFARTSPQQKLIIVEGCQRQGAIVAVTGDGVNDSPALKKADIGVAMGIAGSDVSKQAADMILLDDNFASIVTGVEEGRLIFDNLKKSIAYTLTSNIPEITPFLIFIIANIPLPLGTVTILCIDLGTDMVPAISLAYEQAESDIMKRQPRNPKTDKLVNERLISTAYGQIGMIQALGGFFTYFVILAENGFLPLHLLGLRVDWDDRWINDVEDSYGQQWTYEQRKIVEFTCHTAFFVSIVVVQWADLVICKTRRNSVFQQGMKNKILIFGLFEETALAAFLSYCPGMGVALRMYPLKPTWWFCAFPYSLLIFVYDEVRKLIIRRRPGGWVEKETYY.

The propeptide occupies 1–5; it reads MAFKV. The span at 1–11 shows a compositional bias: basic and acidic residues; the sequence is MAFKVGRDKYE. The segment at 1 to 38 is disordered; it reads MAFKVGRDKYEPAAVSEQGDKKGKKGKKDRDMDELKKE. The Cytoplasmic portion of the chain corresponds to 6-87; it reads GRDKYEPAAV…NALTPPPTTP (82 aa). K9 carries the N6-acetyllysine modification. Residue Y10 is modified to Phosphotyrosine. S16 is modified (phosphoserine; by PKC). At K21 the chain carries N6-acetyllysine. A compositionally biased stretch (basic and acidic residues) spans 28–38; sequence KDRDMDELKKE. Residues S40 and S47 each carry the phosphoserine modification. A phosphoinositide-3 kinase binding region spans residues 82–84; it reads PPP. A helical transmembrane segment spans residues 88–108; sequence EWIKFCRQLFGGFSMLLWIGA. Residues 109-131 are Extracellular-facing; that stretch reads ILCFLAYSIQAATEEEPQNDNLY. A helical membrane pass occupies residues 132-152; that stretch reads LGVVLSAVVIITGCFSYYQEA. Residues 153–288 lie on the Cytoplasmic side of the membrane; it reads KSSKIMESFK…GGQTPIAAEI (136 aa). Residues 216–235 form a disordered region; it reads SSLTGESEPQTRSPDFTNEN. S228 is modified (phosphoserine). A Phosphotyrosine modification is found at Y260. The chain crosses the membrane as a helical span at residues 289–308; it reads EHFIHIITGVAVFLGVSFFI. Residues 309–320 lie on the Extracellular side of the membrane; it reads LSLILEYTWLEA. Residues 321–338 form a helical membrane-spanning segment; the sequence is VIFLIGIIVANVPEGLLA. The Cytoplasmic portion of the chain corresponds to 339–772; the sequence is TVTVCLTLTA…EEGRLIFDNL (434 aa). D376 functions as the 4-aspartylphosphate intermediate in the catalytic mechanism. Phosphoserine is present on residues S452 and S484. Position 487 (K487) interacts with ATP. Y542 bears the Phosphotyrosine mark. Positions 596–717 are mediates interaction with SCN7A; sequence RAAVPDAVGK…QGAIVAVTGD (122 aa). K661 is modified (N6-succinyllysine). Phosphoserine occurs at positions 668 and 675. Mg(2+) is bound by residues D717 and D721. A helical membrane pass occupies residues 773 to 792; sequence KKSIAYTLTSNIPEITPFLI. At 793 to 802 the chain is on the extracellular side; it reads FIIANIPLPL. The chain crosses the membrane as a helical span at residues 803 to 823; it reads GTVTILCIDLGTDMVPAISLA. At 824-843 the chain is on the cytoplasmic side; the sequence is YEQAESDIMKRQPRNPKTDK. The helical transmembrane segment at 844–866 threads the bilayer; the sequence is LVNERLISTAYGQIGMIQALGGF. Residues 867-918 lie on the Extracellular side of the membrane; that stretch reads FTYFVILAENGFLPLHLLGLRVDWDDRWINDVEDSYGQQWTYEQRKIVEFTC. Residues 919–938 traverse the membrane as a helical segment; the sequence is HTAFFVSIVVVQWADLVICK. Residues 939-951 lie on the Cytoplasmic side of the membrane; sequence TRRNSVFQQGMKN. S943 carries the post-translational modification Phosphoserine; by PKA. A helical transmembrane segment spans residues 952-970; it reads KILIFGLFEETALAAFLSY. The Extracellular segment spans residues 971-985; it reads CPGMGVALRMYPLKP. Residues 986–1006 form a helical membrane-spanning segment; sequence TWWFCAFPYSLLIFVYDEVRK. The Cytoplasmic segment spans residues 1007–1023; sequence LIIRRRPGGWVEKETYY.

It belongs to the cation transport ATPase (P-type) (TC 3.A.3) family. Type IIC subfamily. As to quaternary structure, the sodium/potassium-transporting ATPase is composed of a catalytic alpha subunit, an auxiliary non-catalytic beta subunit and an additional regulatory subunit. Interacts with regulatory subunit FXYD1. Interacts with regulatory subunit FXYD3. Interacts with SIK1. Interacts with SLC35G1 and STIM1. Interacts with CLN3; this interaction regulates the sodium/potassium-transporting ATPase complex localization at the plasma membrane. Interacts with SCN7A; activates ATP1A1 P-type sodium:potassium-exchanging transporter activity which indirectly signals to nearby neurons to regulate sodium homeostasis. In terms of processing, phosphorylation on Tyr-10 modulates pumping activity. Phosphorylation of Ser-943 by PKA modulates the response of ATP1A1 to PKC. Dephosphorylation by protein phosphatase 2A (PP2A) following increases in intracellular sodium, leading to increase catalytic activity.

Its subcellular location is the cell membrane. The protein resides in the basolateral cell membrane. It localises to the sarcolemma. It is found in the cell projection. The protein localises to the axon. Its subcellular location is the melanosome. It carries out the reaction K(+)(out) + Na(+)(in) + ATP + H2O = K(+)(in) + Na(+)(out) + ADP + phosphate + H(+). Functionally, this is the catalytic component of the active enzyme, which catalyzes the hydrolysis of ATP coupled with the exchange of sodium and potassium ions across the plasma membrane. This action creates the electrochemical gradient of sodium and potassium ions, providing the energy for active transport of various nutrients. Could also be part of an osmosensory signaling pathway that senses body-fluid sodium levels and controls salt intake behavior as well as voluntary water intake to regulate sodium homeostasis. The polypeptide is Sodium/potassium-transporting ATPase subunit alpha-1 (ATP1A1) (Pongo abelii (Sumatran orangutan)).